Consider the following 219-residue polypeptide: MGDILGAVYDLGHRPYLARRTVYEDRLILSTHGNVCRAINLLTHDNRTTLVYHNNTKRIRFRGLLCAYRVPYCGFRALCRVMLCSLPRLCDIPINGSRDFVADPTRLDSSVNELLVSNGLVTHYDRVHNVPIHTDGFEVVDFTTVFRGPGNFLLPNATNFPRSTTTDQVYMVCLVNTVNCVLRFESELVVWVHSGLYAGDVLDVDNNVIQAPDGVDDND.

The short motif at Lys57–Arg62 is the Nuclear localization signal element. The tract at residues Asp103 to Phe146 is transcription activation. The Nuclear export signal signature appears at Val169–Val178.

The protein belongs to the benyvirus P25 protein family. In terms of assembly, homooligomer.

The protein resides in the host cytoplasm. It is found in the host nucleus. Its function is as follows. Pathogenicity factor implicated in symptom exacerbation. Might function as transcription activator (Potential). In Beet necrotic yellow vein virus (isolate Japan/S) (BNYVV), this protein is Protein P25.